The primary structure comprises 173 residues: Alpha-crystallin A chain (173 aa).

An N-acetylmethionine modification is found at M1. The required for complex formation with BFSP1 and BFSP2 stretch occupies residues 1-63; the sequence is MDIAIQHPWF…RTVLDSGISE (63 aa). Q6 is modified (deamidated glutamine; partial). S45 bears the Phosphoserine mark. Deamidated glutamine; partial is present on Q50. The region spanning 52 to 162 is the sHSP domain; the sequence is LFRTVLDSGI…GHSERAIPVS (111 aa). An N6-acetyllysine mark is found at K70 and K99. H100 lines the Zn(2+) pocket. The residue at position 101 (N101) is a Deamidated asparagine; partial. Positions 102 and 107 each coordinate Zn(2+). S122 bears the Phosphoserine mark. N123 is subject to Deamidated asparagine; partial. Residues 144-173 are disordered; the sequence is PKVPSGVDAGHSERAIPVSREEKPSSAPSS. Residues 153–167 are compositionally biased toward basic and acidic residues; the sequence is GHSERAIPVSREEKP. Residue H154 coordinates Zn(2+). S162 carries an O-linked (GlcNAc) serine glycan.

Belongs to the small heat shock protein (HSP20) family. In terms of assembly, heteromer composed of three CRYAA and one CRYAB subunits. Inter-subunit bridging via zinc ions enhances stability, which is crucial as there is no protein turn over in the lens. Can also form homodimers and homotetramers (dimers of dimers) which serve as the building blocks of homooligomers. Within homooligomers, the zinc-binding motif is created from residues of 3 different molecules. His-100 and Glu-102 from one molecule are ligands of the zinc ion, and His-107 and His-154 residues from additional molecules complete the site with tetrahedral coordination geometry. Part of a complex required for lens intermediate filament formation composed of BFSP1, BFSP2 and CRYAA. In terms of processing, acetylation at Lys-70 may increase chaperone activity. Undergoes age-dependent proteolytical cleavage at the C-terminus.

Its subcellular location is the cytoplasm. The protein resides in the nucleus. In terms of biological role, contributes to the transparency and refractive index of the lens. Acts as a chaperone, preventing aggregation of various proteins under a wide range of stress conditions. Required for the correct formation of lens intermediate filaments as part of a complex composed of BFSP1, BFSP2 and CRYAA. This Canis lupus familiaris (Dog) protein is Alpha-crystallin A chain (CRYAA).